Consider the following 564-residue polypeptide: Probable diguanylate cyclase DgcQ (564 aa).

2 helical membrane passes run 20–40 (LGPGHVVNLCFIVVLLFSTLL) and 360–380 (IALTLLWALFTTMLLISWYVI). Residues 428–563 (HPFSVIQVDL…GRNRVFASDN (136 aa)) enclose the GGDEF domain. A Mg(2+)-binding site is contributed by D436. Substrate contacts are provided by N444, H449, and D453. Residue E479 coordinates Mg(2+). The Proton acceptor role is filled by E479.

As to quaternary structure, homodimer. Mg(2+) serves as cofactor.

It is found in the cell inner membrane. It carries out the reaction 2 GTP = 3',3'-c-di-GMP + 2 diphosphate. Its pathway is glycan metabolism; bacterial cellulose biosynthesis. The protein operates within purine metabolism; 3',5'-cyclic di-GMP biosynthesis. Its function is as follows. Catalyzes the synthesis of cyclic-di-GMP (c-di-GMP) via the condensation of 2 GTP molecules. Cyclic-di-GMP is a second messenger which controls cell surface-associated traits in bacteria. Involved in the regulation of cellulose production. This is Probable diguanylate cyclase DgcQ from Escherichia coli (strain K12).